Here is a 185-residue protein sequence, read N- to C-terminus: Crossover junction endodeoxyribonuclease RuvC (185 aa).

Residues Asp7, Glu68, and Asp141 contribute to the active site. Mg(2+) contacts are provided by Asp7, Glu68, and Asp141.

Belongs to the RuvC family. As to quaternary structure, homodimer which binds Holliday junction (HJ) DNA. The HJ becomes 2-fold symmetrical on binding to RuvC with unstacked arms; it has a different conformation from HJ DNA in complex with RuvA. In the full resolvosome a probable DNA-RuvA(4)-RuvB(12)-RuvC(2) complex forms which resolves the HJ. Mg(2+) is required as a cofactor.

The protein resides in the cytoplasm. It carries out the reaction Endonucleolytic cleavage at a junction such as a reciprocal single-stranded crossover between two homologous DNA duplexes (Holliday junction).. Its function is as follows. The RuvA-RuvB-RuvC complex processes Holliday junction (HJ) DNA during genetic recombination and DNA repair. Endonuclease that resolves HJ intermediates. Cleaves cruciform DNA by making single-stranded nicks across the HJ at symmetrical positions within the homologous arms, yielding a 5'-phosphate and a 3'-hydroxyl group; requires a central core of homology in the junction. The consensus cleavage sequence is 5'-(A/T)TT(C/G)-3'. Cleavage occurs on the 3'-side of the TT dinucleotide at the point of strand exchange. HJ branch migration catalyzed by RuvA-RuvB allows RuvC to scan DNA until it finds its consensus sequence, where it cleaves and resolves the cruciform DNA. The protein is Crossover junction endodeoxyribonuclease RuvC of Mycolicibacterium smegmatis (strain ATCC 700084 / mc(2)155) (Mycobacterium smegmatis).